Reading from the N-terminus, the 125-residue chain is Holo-[acyl-carrier-protein] synthase (125 aa).

The Mg(2+) site is built by D8 and E57.

The protein belongs to the P-Pant transferase superfamily. AcpS family. Mg(2+) is required as a cofactor.

It is found in the cytoplasm. The enzyme catalyses apo-[ACP] + CoA = holo-[ACP] + adenosine 3',5'-bisphosphate + H(+). In terms of biological role, transfers the 4'-phosphopantetheine moiety from coenzyme A to a Ser of acyl-carrier-protein. The polypeptide is Holo-[acyl-carrier-protein] synthase (Koribacter versatilis (strain Ellin345)).